The chain runs to 483 residues: Probable zinc metalloprotease PTRG_04977 (483 aa).

Residues 1–18 (MLFRSALLSNVLLLPACA) form the signal peptide. N-linked (GlcNAc...) asparagine glycans are attached at residues asparagine 96 and asparagine 121. Residues histidine 167, aspartate 187, and glutamate 220 each contribute to the Zn(2+) site. An N-linked (GlcNAc...) asparagine glycan is attached at asparagine 235. Position 247 (aspartate 247) interacts with Zn(2+). N-linked (GlcNAc...) asparagine glycosylation is found at asparagine 310, asparagine 362, asparagine 401, asparagine 411, and asparagine 421. The Fibronectin type-III domain maps to 396–483 (PAMPRNVTID…KSPAVYPFPG (88 aa)).

Belongs to the peptidase M28 family. M28B subfamily. The cofactor is Zn(2+).

Its subcellular location is the secreted. The chain is Probable zinc metalloprotease PTRG_04977 from Pyrenophora tritici-repentis (strain Pt-1C-BFP) (Wheat tan spot fungus).